We begin with the raw amino-acid sequence, 429 residues long: Transcriptional coactivator AacuS (429 aa).

The HTH iclR-type domain maps to 80–144 (MASQTQLLAC…GFLQEPELGH (65 aa)). Residues 110–129 (IKDVAELIGVPENHICRIVR) constitute a DNA-binding region (H-T-H motif).

The protein resides in the nucleus. Transcriptional coactivator; part of the gene cluster that mediates the biosynthesis of the tetrahydroxanthone dimer secalonic acid D. This Aspergillus aculeatus (strain ATCC 16872 / CBS 172.66 / WB 5094) protein is Transcriptional coactivator AacuS.